The primary structure comprises 376 residues: Chaperone protein DnaJ (376 aa).

The region spanning 5-70 is the J domain; sequence DYYEVLGVAR…NKRRAYDAHG (66 aa). The segment at 132 to 209 adopts a CR-type zinc-finger fold; it reads GIERRIEIPT…CHGAGRVEEN (78 aa). Positions 145, 148, 161, 164, 183, 186, 197, and 200 each coordinate Zn(2+). CXXCXGXG motif repeat units lie at residues 145 to 152, 161 to 168, 183 to 190, and 197 to 204; these read CVSCHGSG, CGTCHGRG, CPHCDGRG, and CKTCHGAG.

The protein belongs to the DnaJ family. In terms of assembly, homodimer. Zn(2+) is required as a cofactor.

It localises to the cytoplasm. Functionally, participates actively in the response to hyperosmotic and heat shock by preventing the aggregation of stress-denatured proteins and by disaggregating proteins, also in an autonomous, DnaK-independent fashion. Unfolded proteins bind initially to DnaJ; upon interaction with the DnaJ-bound protein, DnaK hydrolyzes its bound ATP, resulting in the formation of a stable complex. GrpE releases ADP from DnaK; ATP binding to DnaK triggers the release of the substrate protein, thus completing the reaction cycle. Several rounds of ATP-dependent interactions between DnaJ, DnaK and GrpE are required for fully efficient folding. Also involved, together with DnaK and GrpE, in the DNA replication of plasmids through activation of initiation proteins. The polypeptide is Chaperone protein DnaJ (Xanthomonas oryzae pv. oryzae (strain PXO99A)).